The sequence spans 89 residues: UPF0223 protein BAMEG_4214 (89 aa).

It belongs to the UPF0223 family.

This is UPF0223 protein BAMEG_4214 from Bacillus anthracis (strain CDC 684 / NRRL 3495).